The following is an 82-amino-acid chain: Defensin-like protein 7 (82 aa).

A signal peptide spans 1–29; the sequence is MKSSTTSMQLIPTLFFLTILLASPEMVEG. At glutamine 30 the chain carries Pyrrolidone carboxylic acid. Intrachain disulfides connect cysteine 33–cysteine 77, cysteine 44–cysteine 64, cysteine 50–cysteine 71, and cysteine 54–cysteine 73.

The protein belongs to the DEFL family. As to expression, expressed in stems, roots, rosette leaves and flower buds.

It localises to the secreted. The polypeptide is Defensin-like protein 7 (LCR75) (Arabidopsis thaliana (Mouse-ear cress)).